A 2448-amino-acid polypeptide reads, in one-letter code: Non-reducing polyketide synthase mapC (2448 aa).

The tract at residues 14-226 (VLFGPQCPDI…HHEAHREGIQ (213 aa)) is N-terminal acylcarrier protein transacylase domain (SAT). A disordered region spans residues 330–350 (GFSNESPQPSTASLSNSVQTF). A Ketosynthase family 3 (KS3) domain is found at 359 to 775 (ASPIAITGMA…GSNAALIVKE (417 aa)). Catalysis depends on for beta-ketoacyl synthase activity residues C524, H659, and H698. The malonyl-CoA:ACP transacylase (MAT) domain stretch occupies residues 885–1188 (LCFGGQNGLT…HKIDLGGSSG (304 aa)). S972 (for acyl/malonyl transferase activity) is an active-site residue. The interval 1256–1388 (GQEAGLLCQL…GTVCLHQERS (133 aa)) is N-terminal hotdog fold. Residues 1256 to 1565 (GQEAGLLCQL…FTSVSIRSLT (310 aa)) form the PKS/mFAS DH domain. The segment at 1261-1564 (LLCQLSESPD…RFTSVSIRSL (304 aa)) is product template (PT) domain. The active-site Proton acceptor; for dehydratase activity is the H1290. Positions 1414–1565 (ASNGLKGSTV…FTSVSIRSLT (152 aa)) are C-terminal hotdog fold. D1471 serves as the catalytic Proton donor; for dehydratase activity. In terms of domain architecture, Carrier spans 1610-1684 (AKDLATVQEM…GLVEHIFPGH (75 aa)). O-(pantetheine 4'-phosphoryl)serine is present on S1644. The segment at 1841–2076 (PYALEHDLLQ…GFEWVDWTNN (236 aa)) is methyltransferase (CMeT) domain. Active-site for thioesterase activity residues include S2227, D2385, and H2417.

It is found in the cytoplasm. The protein localises to the cytosol. It catalyses the reaction 3 malonyl-CoA + acetyl-CoA + S-adenosyl-L-methionine + H(+) = 5-methylorsellinate + S-adenosyl-L-homocysteine + 3 CO2 + 4 CoA. Its pathway is secondary metabolite biosynthesis; terpenoid biosynthesis. Functionally, non-reducing polyketide synthase; part of the gene cluster that mediates the biosynthesis of mycophenolic acid (MPA), the first isolated antibiotic natural product in the world obtained from a culture of Penicillium brevicompactum in 1893. MpaC catalyzes the synthesis of 5-methylorsellinic acid (5MOA) via the condensation of 1 acetyl-CoA starter unit with 3 malonyl-CoA units and one methylation step. The first step of the pathway is the synthesis of 5-methylorsellinic acid (5MOA) by the cytosolic polyketide synthase mpaC. 5MOA is then converted to the phthalide compound 5,7-dihydroxy-4,6-dimethylphthalide (DHMP) by the endoplasmic reticulum-bound cytochrome P450 monooxygenase mpaDE. MpaDE first catalyzes hydroxylation of 5-MOA to 4,6-dihydroxy-2-(hydroxymethyl)-3-methylbenzoic acid (DHMB). MpaDE then acts as a lactone synthase that catalyzes the ring closure to convert DHMB into DHMP. The next step is the prenylation of DHMP by the Golgi apparatus-associated prenyltransferase mpaA to yield farnesyl-DHMP (FDHMP). The ER-bound oxygenase mpaB then mediates the oxidative cleavage the C19-C20 double bond in FDHMP to yield FDHMP-3C via a mycophenolic aldehyde intermediate. The O-methyltransferase mpaG catalyzes the methylation of FDHMP-3C to yield MFDHMP-3C. After the cytosolic methylation of FDHMP-3C, MFDHMP-3C enters into peroxisomes probably via free diffusion due to its low molecular weight. Upon a peroxisomal CoA ligation reaction, catalyzed by a beta-oxidation component enzyme acyl-CoA ligase ACL891, MFDHMP-3C-CoA would then be restricted to peroxisomes for the following beta-oxidation pathway steps. The peroxisomal beta-oxidation machinery than converts MFDHMP-3C-CoA into MPA_CoA, via a beta-oxidation chain-shortening process. Finally mpaH acts as a peroxisomal acyl-CoA hydrolase with high substrate specificity toward MPA-CoA to release the final product MPA. This is Non-reducing polyketide synthase mapC from Penicillium brevicompactum.